A 131-amino-acid polypeptide reads, in one-letter code: Small ribosomal subunit protein uS8 (131 aa).

The protein belongs to the universal ribosomal protein uS8 family. Part of the 30S ribosomal subunit. Contacts proteins S5 and S12.

In terms of biological role, one of the primary rRNA binding proteins, it binds directly to 16S rRNA central domain where it helps coordinate assembly of the platform of the 30S subunit. This is Small ribosomal subunit protein uS8 from Vesicomyosocius okutanii subsp. Calyptogena okutanii (strain HA).